Consider the following 470-residue polypeptide: N amino acid transport system protein (470 aa).

Residues 1–11 (MDSQYETKKND) are compositionally biased toward basic and acidic residues. The disordered stretch occupies residues 1 to 21 (MDSQYETKKNDPNAIMPYPES). Residues 1–56 (MDSQYETKKNDPNAIMPYPESNDEHVGEVRGLGGGIMDKEPEAQEGHAKFHRLGWK) are Extracellular-facing. The next 2 membrane-spanning stretches (helical) occupy residues 57–77 (RLTV…LPGA) and 78–98 (FATL…LICI). The Extracellular portion of the chain corresponds to 99 to 131 (YTAHVIGQTKLKHPEIAHYADVGRVMFGRWGYE). The chain crosses the membrane as a helical span at residues 132–152 (IISFMFVLQLIFIVGSHVLTG). Residues 153–168 (TIMWGTITDNGNGTCS) are Cytoplasmic-facing. 2 helical membrane passes run 169–189 (LVFG…PSFA) and 191–211 (VAIL…ITMI). Residues 212–236 (ATGIRSSHQEGGLAAVPWSCWPKED) lie on the Cytoplasmic side of the membrane. The helical transmembrane segment at 237–257 (LSLAEGFIAVSNIVFAYSFAM) threads the bilayer. Over 258-275 (CQFSFMDEMHTPSDYKKS) the chain is Extracellular. The chain crosses the membrane as a helical span at residues 276-296 (IVALGLIEIFIYTVTGGVVYA). Topologically, residues 297 to 316 (FVGPEVQSPALLSAGPLLAK) are cytoplasmic. The helical transmembrane segment at 317-337 (VAFGIALPVIFISGSINTVVV) threads the bilayer. Over 338-357 (SRYLIERIWPNNVIRYVNTP) the chain is Extracellular. Residues 358–378 (AGWMVWLGFDFGITLIAWVIA) form a helical membrane-spanning segment. Topologically, residues 379–386 (EAIPFFSD) are cytoplasmic. The helical transmembrane segment at 387 to 407 (LLAICSALFISGFSFYFPALM) threads the bilayer. Over 408–427 (YFKITRNDAKSQGKKYFLDA) the chain is Extracellular. Residues 428-448 (LNMLCFVIGMGILGIGTYAAI) traverse the membrane as a helical segment. The Cytoplasmic segment spans residues 449–470 (QDIMDRYDHGKVSKPYSCAPLA).

Belongs to the amino acid/polyamine transporter 2 family.

The protein resides in the membrane. Required for the transport of neutral aliphatic and aromatic amino acids via the N system. The chain is N amino acid transport system protein (mtr) from Neurospora crassa (strain ATCC 24698 / 74-OR23-1A / CBS 708.71 / DSM 1257 / FGSC 987).